We begin with the raw amino-acid sequence, 85 residues long: Progonadoliberin-2 (85 aa).

A signal peptide spans 1–23 (MCVSRLVLLFGLLLCVGAQLSNA). The residue at position 24 (Q24) is a Pyrrolidone carboxylic acid. Position 33 is a glycine amide (G33).

The protein belongs to the GnRH family.

It localises to the secreted. Stimulates the secretion of gonadotropins. The polypeptide is Progonadoliberin-2 (gnrh2) (Dicentrarchus labrax (European seabass)).